Reading from the N-terminus, the 420-residue chain is Putative RNA-binding protein Alsin2 (420 aa).

A coiled-coil region spans residues 99–130 (IADCDRRTDSAKQRLKETQEELTAEVAEKANA). Composition is skewed to basic and acidic residues over residues 242–259 (AELKRTGKMTDREDEGRG), 282–363 (RERQ…RFGD), and 373–399 (HHRDDRRRSRSRERSPRERRNFNHFRD). A disordered region spans residues 242–420 (AELKRTGKMT…SYSRERNYRR (179 aa)).

This sequence belongs to the Luc7 family. As to quaternary structure, interacts with x16 (via Arg/Ser-rich region).

Its function is as follows. May bind to RNA via its Arg/Ser-rich domain. The sequence is that of Putative RNA-binding protein Alsin2 from Drosophila melanogaster (Fruit fly).